A 122-amino-acid chain; its full sequence is uncharacterized protein (122 aa).

Positions 1-10 are enriched in polar residues; the sequence is MGTGLRSQSL. A disordered region spans residues 1-68; the sequence is MGTGLRSQSL…GQEWLPGSLG (68 aa). A compositionally biased stretch (basic and acidic residues) spans 40-56; sequence QGREKSRSSDGGPERLD.

This is an uncharacterized protein from Bos taurus (Bovine).